The chain runs to 257 residues: MIIVLSPAKSLDYDTPPRTKTHTLPDFIERSAELIDVLRKLSPAQIGTLMHISDPLAALNATRYADWSPEFTAENSKQAALAFDGDVYGGLDANSLAVDDLQFAQKHLRILSGLYGVLRPLDWMQPYRLEMGTRLANPRGKDLYAFWGDDVTLALNELFKQDDDAVLVNLASEEYFKVVRPKVLKARIVTPVFEDWKNGQYKIISFYAKRARGLMARYAIEHRITDPRKLKAFDVDGYAFAAADSDDERWVFRRKLT.

This sequence belongs to the UPF0246 family.

This is UPF0246 protein Rpic_2164 from Ralstonia pickettii (strain 12J).